We begin with the raw amino-acid sequence, 48 residues long: Ambineela (48 aa).

Monomer. In terms of processing, the blue color is due to an unidentified non-fluorescent cofactor, covalently bound to it.

In terms of biological role, ambineela is a blue protein and has a pI of 8.7. In Acidianus ambivalens (Desulfurolobus ambivalens), this protein is Ambineela.